The sequence spans 264 residues: MKNHMSDMSPEEVRQLVRKGQMTGPTAGMAASYAQANLVVLQKDLAFDFLLFCQRNQKPCPVLDVTDAGSPVPAIAAPGADIRTDFPKYRIYRHGVLTEEVTDITPYWKDDDVGFLIGCSFSFEQALINQHIPIRHIDEGVNVPMYKTDIDCVPAGPFSGKMVVSMRPIPERLAVRAAQVTSRFPAVHGAPVRIGNPQSIGISDLHQPDFGDAVTVREGEVPVFWACGVTPQAVIMEAKPDIVITHSPGHMLITDIRNESLAVL.

It belongs to the D-glutamate cyclase family.

The sequence is that of Putative hydro-lyase RBAM_004300 from Bacillus velezensis (strain DSM 23117 / BGSC 10A6 / LMG 26770 / FZB42) (Bacillus amyloliquefaciens subsp. plantarum).